The sequence spans 411 residues: tRNA pseudouridine synthase Pus10 (411 aa).

Residues Ala-65–Pro-192 enclose the THUMP domain. Asp-244 serves as the catalytic Nucleophile. The substrate site is built by Tyr-305 and Tyr-376.

The protein belongs to the pseudouridine synthase Pus10 family.

It carries out the reaction uridine(54) in tRNA = pseudouridine(54) in tRNA. It catalyses the reaction uridine(55) in tRNA = pseudouridine(55) in tRNA. In terms of biological role, responsible for synthesis of pseudouridine from uracil-54 and uracil-55 in the psi GC loop of transfer RNAs. The protein is tRNA pseudouridine synthase Pus10 of Pyrobaculum arsenaticum (strain DSM 13514 / JCM 11321 / PZ6).